The following is a 345-amino-acid chain: Phosphoribosylformylglycinamidine cyclo-ligase (345 aa).

Belongs to the AIR synthase family.

It is found in the cytoplasm. It catalyses the reaction 2-formamido-N(1)-(5-O-phospho-beta-D-ribosyl)acetamidine + ATP = 5-amino-1-(5-phospho-beta-D-ribosyl)imidazole + ADP + phosphate + H(+). Its pathway is purine metabolism; IMP biosynthesis via de novo pathway; 5-amino-1-(5-phospho-D-ribosyl)imidazole from N(2)-formyl-N(1)-(5-phospho-D-ribosyl)glycinamide: step 2/2. The chain is Phosphoribosylformylglycinamidine cyclo-ligase from Bifidobacterium longum subsp. infantis (strain ATCC 15697 / DSM 20088 / JCM 1222 / NCTC 11817 / S12).